A 147-amino-acid chain; its full sequence is Large ribosomal subunit protein bL9 (147 aa).

The interval 44-63 (VKTLDAQKRSEDKRKEQEKL) is disordered. Basic and acidic residues predominate over residues 48–63 (DAQKRSEDKRKEQEKL).

Belongs to the bacterial ribosomal protein bL9 family.

Its function is as follows. Binds to the 23S rRNA. The sequence is that of Large ribosomal subunit protein bL9 from Brevibacillus brevis (strain 47 / JCM 6285 / NBRC 100599).